A 185-amino-acid chain; its full sequence is Peptidyl-tRNA hydrolase (185 aa).

Y14 lines the tRNA pocket. H19 (proton acceptor) is an active-site residue. Positions 64, 66, and 112 each coordinate tRNA.

The protein belongs to the PTH family. As to quaternary structure, monomer.

The protein resides in the cytoplasm. The catalysed reaction is an N-acyl-L-alpha-aminoacyl-tRNA + H2O = an N-acyl-L-amino acid + a tRNA + H(+). Functionally, hydrolyzes ribosome-free peptidyl-tRNAs (with 1 or more amino acids incorporated), which drop off the ribosome during protein synthesis, or as a result of ribosome stalling. In terms of biological role, catalyzes the release of premature peptidyl moieties from peptidyl-tRNA molecules trapped in stalled 50S ribosomal subunits, and thus maintains levels of free tRNAs and 50S ribosomes. In Exiguobacterium sibiricum (strain DSM 17290 / CCUG 55495 / CIP 109462 / JCM 13490 / 255-15), this protein is Peptidyl-tRNA hydrolase.